Here is a 130-residue protein sequence, read N- to C-terminus: Small ribosomal subunit protein uS8 (130 aa).

It belongs to the universal ribosomal protein uS8 family. In terms of assembly, part of the 30S ribosomal subunit. Contacts proteins S5 and S12.

Functionally, one of the primary rRNA binding proteins, it binds directly to 16S rRNA central domain where it helps coordinate assembly of the platform of the 30S subunit. The chain is Small ribosomal subunit protein uS8 from Pectobacterium carotovorum subsp. carotovorum (strain PC1).